The following is a 361-amino-acid chain: Prostaglandin D2 receptor (361 aa).

At 1–21 (MRPLFYRCHNTTSVEKGNSAT) the chain is on the extracellular side. A glycan (N-linked (GlcNAc...) asparagine) is linked at asparagine 10. A helical membrane pass occupies residues 22-42 (MGGVLFSTGLVGNLLALGLLA). The Cytoplasmic portion of the chain corresponds to 43-58 (RSGLGSCPPRSPRPPP). A helical transmembrane segment spans residues 59 to 79 (SVFYVLVFGLTITDLLGKCLV). Residues 80–107 (SPFVLSAYAQNRSLRELVPGSDSSLCQA) are Extracellular-facing. N-linked (GlcNAc...) asparagine glycosylation occurs at asparagine 90. A disulfide bridge links cysteine 105 with cysteine 183. Residues 108–128 (FAFIMSFFGLASTLQLLAMAL) traverse the membrane as a helical segment. Over 129-150 (ECWLSLGHPFFHRRHLTPRRGA) the chain is Cytoplasmic. The chain crosses the membrane as a helical span at residues 151 to 171 (MVAPVVGAFCLAFCALPLVGF). The Extracellular portion of the chain corresponds to 172 to 195 (GKFVQYCPGTWCFFQMVHEERSLS). A helical membrane pass occupies residues 196–216 (VLSYSVLYASLMLLLVLAIVL). Residues 217-262 (CNLSAMRNLYAMHLRLRGLLRPGSRERAEPGAGEREATPLHLEELD) are Cytoplasmic-facing. A helical transmembrane segment spans residues 263–283 (HLLLLALMTVLFTMCSLPLIY). Residues 284–310 (RAYYGAFKAVPEQNGTTEETEDLRALR) are Extracellular-facing. N-linked (GlcNAc...) asparagine glycosylation occurs at asparagine 297. A helical transmembrane segment spans residues 311 to 331 (FLSVISIVDPWIFIIFRTSVF). Residues 332–361 (RMFFRKIFIRPLIYRNWHSNSCQTNMESSL) lie on the Cytoplasmic side of the membrane.

It belongs to the G-protein coupled receptor 1 family.

Its subcellular location is the cell membrane. Functionally, receptor for prostaglandin D2 (PGD2). The activity of this receptor is mainly mediated by G(s) proteins that stimulate adenylate cyclase, resulting in an elevation of intracellular cAMP. A mobilization of calcium is also observed, but without formation of inositol 1,4,5-trisphosphate. Involved in PLA2G3-dependent maturation of mast cells. PLA2G3 is secreted by immature mast cells and acts on nearby fibroblasts upstream to PTDGS to synthesize PGD2, which in turn promotes mast cell maturation and degranulation via PTGDR. This is Prostaglandin D2 receptor (PTGDR) from Bos taurus (Bovine).